The sequence spans 369 residues: Anhydro-N-acetylmuramic acid kinase (369 aa).

12–19 (GTSLDGVD) is a binding site for ATP.

The protein belongs to the anhydro-N-acetylmuramic acid kinase family.

It carries out the reaction 1,6-anhydro-N-acetyl-beta-muramate + ATP + H2O = N-acetyl-D-muramate 6-phosphate + ADP + H(+). Its pathway is amino-sugar metabolism; 1,6-anhydro-N-acetylmuramate degradation. It participates in cell wall biogenesis; peptidoglycan recycling. Catalyzes the specific phosphorylation of 1,6-anhydro-N-acetylmuramic acid (anhMurNAc) with the simultaneous cleavage of the 1,6-anhydro ring, generating MurNAc-6-P. Is required for the utilization of anhMurNAc either imported from the medium or derived from its own cell wall murein, and thus plays a role in cell wall recycling. This Escherichia coli (strain SMS-3-5 / SECEC) protein is Anhydro-N-acetylmuramic acid kinase.